The chain runs to 292 residues: Mitochondrial ornithine transporter 1 (292 aa).

3 Solcar repeats span residues 11–97 (EGAI…CSKF), 105–196 (SPLG…VKKS), and 211–292 (SKIW…LSAL). 6 consecutive transmembrane segments (helical) span residues 14-34 (ILDI…EFPF), 69-89 (FFQG…TLFV), 104-124 (VSPL…ASLV), 171-187 (GQSG…VAWF), 213-233 (IWEL…SIFP), and 267-287 (GLGI…YIFE).

It belongs to the mitochondrial carrier (TC 2.A.29) family.

Its subcellular location is the mitochondrion inner membrane. Functionally, required for arginine biosynthesis. Transports ornithine synthesized from glutamate in the mitochondrial matrix to the cytosol, where it is converted to arginine. The polypeptide is Mitochondrial ornithine transporter 1 (ORT1) (Saccharomyces cerevisiae (strain ATCC 204508 / S288c) (Baker's yeast)).